Reading from the N-terminus, the 184-residue chain is TATA-box-binding protein (184 aa).

2 consecutive repeat copies span residues 9-85 (IENI…IDKL) and 100-178 (VQNI…KKEL).

The protein belongs to the TBP family.

General factor that plays a role in the activation of archaeal genes transcribed by RNA polymerase. Binds specifically to the TATA box promoter element which lies close to the position of transcription initiation. The sequence is that of TATA-box-binding protein (tbp) from Thermoplasma acidophilum (strain ATCC 25905 / DSM 1728 / JCM 9062 / NBRC 15155 / AMRC-C165).